Here is a 914-residue protein sequence, read N- to C-terminus: Probable dipeptidyl-aminopeptidase B (914 aa).

Over residues 1-10 (MGKSEADEDA) the composition is skewed to acidic residues. The interval 1–81 (MGKSEADEDA…DQPFLPSRKG (81 aa)) is disordered. The Cytoplasmic segment spans residues 1–89 (MGKSEADEDA…KGSGARARRV (89 aa)). Over residues 20-34 (SSSAASQTSSDSGLS) the composition is skewed to low complexity. A helical; Signal-anchor for type II membrane protein membrane pass occupies residues 90-110 (FWGLLLLCLAGWVLAFVLFLI). Residues 111–914 (QGRSGYSATS…FKRALPVFVH (804 aa)) are Vacuolar-facing. Residues N347 and N638 are each glycosylated (N-linked (GlcNAc...) asparagine). S752 (charge relay system) is an active-site residue. A glycan (N-linked (GlcNAc...) asparagine) is linked at N806. Residues D829 and H862 each act as charge relay system in the active site.

This sequence belongs to the peptidase S9B family.

It localises to the vacuole membrane. The enzyme catalyses Release of an N-terminal dipeptide, Xaa-Yaa-|-Zaa-, from a polypeptide, preferentially when Yaa is Pro, provided Zaa is neither Pro nor hydroxyproline.. Its function is as follows. Type IV dipeptidyl-peptidase which removes N-terminal dipeptides sequentially from polypeptides having unsubstituted N-termini provided that the penultimate residue is proline. In Aspergillus terreus (strain NIH 2624 / FGSC A1156), this protein is Probable dipeptidyl-aminopeptidase B (dapB).